The sequence spans 317 residues: Lipoyl synthase (317 aa).

Residues 1–22 (MVTVVNTLNRPRHPEKQNRPET) are disordered. A compositionally biased stretch (basic and acidic residues) spans 12–22 (RHPEKQNRPET). [4Fe-4S] cluster contacts are provided by C57, C62, C68, C83, C87, C90, and S296. Residues 69–285 (WEKKHATFMI…ETVAYAKGFL (217 aa)) enclose the Radical SAM core domain.

This sequence belongs to the radical SAM superfamily. Lipoyl synthase family. Requires [4Fe-4S] cluster as cofactor.

Its subcellular location is the cytoplasm. The catalysed reaction is [[Fe-S] cluster scaffold protein carrying a second [4Fe-4S](2+) cluster] + N(6)-octanoyl-L-lysyl-[protein] + 2 oxidized [2Fe-2S]-[ferredoxin] + 2 S-adenosyl-L-methionine + 4 H(+) = [[Fe-S] cluster scaffold protein] + N(6)-[(R)-dihydrolipoyl]-L-lysyl-[protein] + 4 Fe(3+) + 2 hydrogen sulfide + 2 5'-deoxyadenosine + 2 L-methionine + 2 reduced [2Fe-2S]-[ferredoxin]. It participates in protein modification; protein lipoylation via endogenous pathway; protein N(6)-(lipoyl)lysine from octanoyl-[acyl-carrier-protein]: step 2/2. Catalyzes the radical-mediated insertion of two sulfur atoms into the C-6 and C-8 positions of the octanoyl moiety bound to the lipoyl domains of lipoate-dependent enzymes, thereby converting the octanoylated domains into lipoylated derivatives. This chain is Lipoyl synthase, found in Azorhizobium caulinodans (strain ATCC 43989 / DSM 5975 / JCM 20966 / LMG 6465 / NBRC 14845 / NCIMB 13405 / ORS 571).